The following is a 303-amino-acid chain: RING finger protein 148 (303 aa).

Positions 1 to 34 (MSLLRITSSAHSSASSRLWRLGIFLLLSLPDSKG) are cleaved as a signal peptide. N43 carries N-linked (GlcNAc...) asparagine glycosylation. One can recognise a PA domain in the interval 65 to 167 (HSPLERVSGV…LKGMELLHLI (103 aa)). A helical transmembrane segment spans residues 186–208 (WLSHYIMSLFTFLTATVAYLFLY). The RING-type; atypical zinc finger occupies 256-297 (CVVCFDIYKPQDVVRILTCKHIFHKACIDPWLLAHRTCPMCK).

The protein resides in the membrane. In Bos taurus (Bovine), this protein is RING finger protein 148 (RNF148).